The sequence spans 117 residues: Large ribosomal subunit protein bL20 (117 aa).

Belongs to the bacterial ribosomal protein bL20 family.

Binds directly to 23S ribosomal RNA and is necessary for the in vitro assembly process of the 50S ribosomal subunit. It is not involved in the protein synthesizing functions of that subunit. The protein is Large ribosomal subunit protein bL20 of Carboxydothermus hydrogenoformans (strain ATCC BAA-161 / DSM 6008 / Z-2901).